The following is a 254-amino-acid chain: ATP-dependent L-serine kinase SbnI (254 aa).

The active site involves Glu-20. An ADP-binding site is contributed by Ser-33. Ile-57 lines the O-phospho-L-serine pocket. Asp-58, Gly-59, His-61, and Arg-62 together coordinate ADP. Positions 59 and 61 each coordinate O-phospho-L-serine. 2 residues coordinate O-phospho-L-serine: Trp-98 and Arg-229.

As to quaternary structure, forms dimers and tetramers in solution. Predominantly forms dimers. Dimerization/oligomerization is not essential for kinase activity.

The enzyme catalyses L-serine + ATP = O-phospho-L-serine + ADP + H(+). Its pathway is siderophore biosynthesis. With respect to regulation, binds heme and heme binding inhibits DNA binding. Functionally, free serine kinase that uses ATP to phosphorylate L-serine to yield O-phospho-L-serine and ADP. O-phospho-L-serine serves as a substrate for SbnA and is a precursor for staphyloferrin B biosynthesis. Is also a DNA-binding regulatory protein that senses heme to control gene expression for siderophore biosynthesis. Binds to DNA within the sbnC coding region and is required for expression of genes in the sbn operon from sbnD onward. The protein is ATP-dependent L-serine kinase SbnI of Staphylococcus aureus (strain NCTC 8325 / PS 47).